We begin with the raw amino-acid sequence, 311 residues long: F-box protein At3g18320 (311 aa).

The 46-residue stretch at Met-1–Lys-46 folds into the F-box domain.

This chain is F-box protein At3g18320, found in Arabidopsis thaliana (Mouse-ear cress).